A 530-amino-acid polypeptide reads, in one-letter code: Sulfate adenylyltransferase (530 aa).

The tract at residues 1–178 is N-terminal; the sequence is MPIPAPHGGK…IQGLDYPTHY (178 aa). A catalytic region spans residues 179-410; the sequence is DYIPFRKTPT…LRESNPPRSK (232 aa). Residue Q208 participates in sulfate binding. ATP is bound by residues 208–211 and 304–307; these read QTRN and GRDH. Catalysis depends on residues T209, R210, and N211. R210 serves as a coordination point for sulfate. A308 is a binding site for sulfate. V348 lines the ATP pocket. The segment at 411–530 is required for oligomerization; adenylyl-sulfate kinase-like; the sequence is QGFAIVIDSS…LVSQGFYQQS (120 aa).

It belongs to the sulfate adenylyltransferase family. In terms of assembly, homohexamer. Dimer of trimers.

The protein resides in the cytoplasm. It catalyses the reaction sulfate + ATP + H(+) = adenosine 5'-phosphosulfate + diphosphate. It functions in the pathway sulfur metabolism; hydrogen sulfide biosynthesis; sulfite from sulfate: step 1/3. Catalyzes the first intracellular reaction of sulfate assimilation, forming adenosine-5'-phosphosulfate (APS) from inorganic sulfate and ATP. Plays an important role in sulfate activation as a component of the biosynthesis pathway of sulfur-containing amino acids. The protein is Sulfate adenylyltransferase of Debaryomyces hansenii (strain ATCC 36239 / CBS 767 / BCRC 21394 / JCM 1990 / NBRC 0083 / IGC 2968) (Yeast).